The following is a 400-amino-acid chain: Subtilisin-like protease 7 (400 aa).

A signal peptide spans 1 to 20; it reads MGFITKAIPLALAAASVING. The propeptide occupies 21–119; the sequence is AEILETRAGV…IERDARVQIN (99 aa). In terms of domain architecture, Inhibitor I9 spans 36 to 118; it reads KYIVVMNDGI…YIERDARVQI (83 aa). Residues 129 to 400 form the Peptidase S8 domain; that stretch reads SWGLARVGSK…SKLINNGSGM (272 aa). Catalysis depends on charge relay system residues aspartate 161 and histidine 192. An N-linked (GlcNAc...) asparagine glycan is attached at asparagine 252. The active-site Charge relay system is the serine 346. Residue asparagine 396 is glycosylated (N-linked (GlcNAc...) asparagine).

It belongs to the peptidase S8 family.

It localises to the secreted. In terms of biological role, secreted subtilisin-like serine protease with keratinolytic activity that contributes to pathogenicity. This chain is Subtilisin-like protease 7 (SUB7), found in Trichophyton violaceum.